Consider the following 532-residue polypeptide: Mitogen-activated protein kinase kinase mkk1 (532 aa).

Positions 235–505 (IVELGGLGEG…PWKMLEHPWM (271 aa)) constitute a Protein kinase domain. ATP is bound by residues 241 to 249 (LGEGAGGAV) and K264. The active-site Proton acceptor is the D362.

This sequence belongs to the protein kinase superfamily. STE Ser/Thr protein kinase family. MAP kinase kinase subfamily.

The catalysed reaction is L-seryl-[protein] + ATP = O-phospho-L-seryl-[protein] + ADP + H(+). It carries out the reaction L-threonyl-[protein] + ATP = O-phospho-L-threonyl-[protein] + ADP + H(+). In terms of biological role, mitogen-activated protein kinase kinase, part of the mkh1-mkk1-spm1 MAPK cascade that regulates regulates vegetative growth, conidial formation, colony surface hydrophobicity, osmotic stress, cell wall integrity maintenance, carbon and nitrogen source utilization, chitin distribution, septa formation, and pathogenicity. This is Mitogen-activated protein kinase kinase mkk1 from Cytospora mali (Apple Valsa canker fungus).